Here is a 493-residue protein sequence, read N- to C-terminus: Probable cytochrome P450 6a13 (493 aa).

A heme-binding site is contributed by Cys-435.

The protein belongs to the cytochrome P450 family. It depends on heme as a cofactor.

It localises to the endoplasmic reticulum membrane. It is found in the microsome membrane. Its function is as follows. May be involved in the metabolism of insect hormones and in the breakdown of synthetic insecticides. The chain is Probable cytochrome P450 6a13 (Cyp6a13) from Drosophila melanogaster (Fruit fly).